Reading from the N-terminus, the 412-residue chain is Phosphoglycerate kinase, plasmid (412 aa).

Substrate-binding positions include 39 to 41, R55, 78 to 81, R133, and R166; these read DLN and HLGR. Residues K217, E339, and 365-368 each bind ATP; that span reads GGDT.

It belongs to the phosphoglycerate kinase family. Monomer.

It localises to the cytoplasm. The enzyme catalyses (2R)-3-phosphoglycerate + ATP = (2R)-3-phospho-glyceroyl phosphate + ADP. Its pathway is carbohydrate biosynthesis; Calvin cycle. This is Phosphoglycerate kinase, plasmid (cbbKP) from Cupriavidus necator (strain ATCC 17699 / DSM 428 / KCTC 22496 / NCIMB 10442 / H16 / Stanier 337) (Ralstonia eutropha).